Reading from the N-terminus, the 117-residue chain is UPF0295 protein RBAM_008830 (117 aa).

Helical transmembrane passes span 13-33 (TFAL…LFFK) and 41-61 (LFMI…FWIG).

It belongs to the UPF0295 family.

The protein resides in the cell membrane. This is UPF0295 protein RBAM_008830 from Bacillus velezensis (strain DSM 23117 / BGSC 10A6 / LMG 26770 / FZB42) (Bacillus amyloliquefaciens subsp. plantarum).